Here is a 257-residue protein sequence, read N- to C-terminus: Transmembrane protein 101 (257 aa).

The next 8 helical transmembrane spans lie at V21–E40, V52–G72, W77–G97, Y110–L130, S139–L159, L182–L202, I206–H226, and F233–L253.

The protein resides in the membrane. Functionally, may activate NF-kappa-B signaling pathways. The chain is Transmembrane protein 101 (TMEM101) from Homo sapiens (Human).